Consider the following 413-residue polypeptide: Lipoyl synthase, mitochondrial (413 aa).

A mitochondrion-targeting transit peptide spans 1–33; the sequence is MAAATNRFRALYSSSRVATPQAGSASYLSYRGY. Positions 133, 138, 144, 164, 168, 171, and 379 each coordinate [4Fe-4S] cluster. Positions 147-368 constitute a Radical SAM core domain; it reads GGDKAAATAT…RQRALDMGFL (222 aa).

The protein belongs to the radical SAM superfamily. Lipoyl synthase family. It depends on [4Fe-4S] cluster as a cofactor.

The protein resides in the mitochondrion. It catalyses the reaction [[Fe-S] cluster scaffold protein carrying a second [4Fe-4S](2+) cluster] + N(6)-octanoyl-L-lysyl-[protein] + 2 oxidized [2Fe-2S]-[ferredoxin] + 2 S-adenosyl-L-methionine + 4 H(+) = [[Fe-S] cluster scaffold protein] + N(6)-[(R)-dihydrolipoyl]-L-lysyl-[protein] + 4 Fe(3+) + 2 hydrogen sulfide + 2 5'-deoxyadenosine + 2 L-methionine + 2 reduced [2Fe-2S]-[ferredoxin]. The protein operates within protein modification; protein lipoylation via endogenous pathway; protein N(6)-(lipoyl)lysine from octanoyl-[acyl-carrier-protein]: step 2/2. Catalyzes the radical-mediated insertion of two sulfur atoms into the C-6 and C-8 positions of the octanoyl moiety bound to the lipoyl domains of lipoate-dependent enzymes, thereby converting the octanoylated domains into lipoylated derivatives. This Emericella nidulans (strain FGSC A4 / ATCC 38163 / CBS 112.46 / NRRL 194 / M139) (Aspergillus nidulans) protein is Lipoyl synthase, mitochondrial.